Consider the following 135-residue polypeptide: Ribonuclease VapC9 (135 aa).

The PINc domain maps to 15–118 (VVDTNVLMYV…LKRKAKQRGI (104 aa)). Positions 17 and 88 each coordinate Mg(2+).

It belongs to the PINc/VapC protein family. Dimer. The cofactor is Mg(2+).

Its function is as follows. Toxic component of a type II toxin-antitoxin (TA) system. An RNase. This is Ribonuclease VapC9 from Archaeoglobus fulgidus (strain ATCC 49558 / DSM 4304 / JCM 9628 / NBRC 100126 / VC-16).